The following is a 347-amino-acid chain: NADH-ubiquinone oxidoreductase chain 2 (347 aa).

The next 10 membrane-spanning stretches (helical) occupy residues 3–23 (PIIL…TMIS), 25–45 (HWLL…PILM), 59–79 (YFLT…INTA), 96–116 (LVTM…FWVP), 127–147 (GMLL…QIFP), 150–170 (NPNI…WGGL), 193–213 (ILMY…MLTI), 240–260 (ITLT…LTGF), 274–294 (SNIM…YFYM), and 323–343 (IFLL…SPAL).

It belongs to the complex I subunit 2 family. Core subunit of respiratory chain NADH dehydrogenase (Complex I) which is composed of 45 different subunits. Interacts with TMEM242.

The protein localises to the mitochondrion inner membrane. The catalysed reaction is a ubiquinone + NADH + 5 H(+)(in) = a ubiquinol + NAD(+) + 4 H(+)(out). In terms of biological role, core subunit of the mitochondrial membrane respiratory chain NADH dehydrogenase (Complex I) which catalyzes electron transfer from NADH through the respiratory chain, using ubiquinone as an electron acceptor. Essential for the catalytic activity and assembly of complex I. This chain is NADH-ubiquinone oxidoreductase chain 2, found in Lemur catta (Ring-tailed lemur).